Reading from the N-terminus, the 345-residue chain is Dihydroorotase (345 aa).

Histidine 13 and histidine 15 together coordinate Zn(2+). Residues histidine 15–arginine 17 and asparagine 41 each bind substrate. Positions 99, 136, 174, and 247 each coordinate Zn(2+). Residue lysine 99 is modified to N6-carboxylysine. Histidine 136 is a substrate binding site. Aspartate 247 is an active-site residue. Substrate is bound by residues histidine 251 and alanine 263.

This sequence belongs to the metallo-dependent hydrolases superfamily. DHOase family. Class II DHOase subfamily. In terms of assembly, homodimer. Zn(2+) serves as cofactor.

It carries out the reaction (S)-dihydroorotate + H2O = N-carbamoyl-L-aspartate + H(+). Its pathway is pyrimidine metabolism; UMP biosynthesis via de novo pathway; (S)-dihydroorotate from bicarbonate: step 3/3. Functionally, catalyzes the reversible cyclization of carbamoyl aspartate to dihydroorotate. This is Dihydroorotase from Halorhodospira halophila (strain DSM 244 / SL1) (Ectothiorhodospira halophila (strain DSM 244 / SL1)).